The following is a 582-amino-acid chain: MLSDIDICRSTPLKNISEVAKQAGLHHNEHQPLGQYKSKVSLTSLERLASQQDGKLVVVTAITPTPLGEGKTVTTIGLAQGLAKINQSAMACIRQPSMGPVFGVKGGAAGGGYSQVAPMEQLNLHLTGDIHAVTVAHNLASAAIDARLYHEQREGLEAFEARSGLKALDIDPRRIVWRRVLDHNDRALRMITVGKNEADKTINGFEREDGFDISAASELMAILALTDDLQDLRKRIGRVVLAYNNQGLPLTADDFNVAGAMTVTMKDSIEPTLMQTLEGVPTLIHAGPFANIAHGNSSIIADKIALKLSDFVVTEGGFGSDMGFEKACNIKVKASNKKPDCAVIVATLRGLKANSGLYDLRPGTPLPDSIFNDDQDALIAGFENLKWHINNVKQYQVPTVVAINRFPQDSAQELNALKQMITDFDPSVSVEVSEAFGQGGEGATQLAHAVVKACQKQSEFKPLYHSEQSLEEKLMAVAEVGYGAASISLSPLAKKQLAEFKLHGYSDLSVCLAKTPLSISTEAHIKGAPSQFDVPVRELKLCAGAGFIYALCGNVMTMPGLPDKPAFMSLDIDSKGNIVGLS.

65–72 (TPLGEGKT) serves as a coordination point for ATP.

The protein belongs to the formate--tetrahydrofolate ligase family.

The catalysed reaction is (6S)-5,6,7,8-tetrahydrofolate + formate + ATP = (6R)-10-formyltetrahydrofolate + ADP + phosphate. It functions in the pathway one-carbon metabolism; tetrahydrofolate interconversion. This chain is Formate--tetrahydrofolate ligase, found in Vibrio atlanticus (strain LGP32) (Vibrio splendidus (strain Mel32)).